The chain runs to 138 residues: ATP synthase epsilon chain (138 aa).

The protein belongs to the ATPase epsilon chain family. As to quaternary structure, F-type ATPases have 2 components, CF(1) - the catalytic core - and CF(0) - the membrane proton channel. CF(1) has five subunits: alpha(3), beta(3), gamma(1), delta(1), epsilon(1). CF(0) has three main subunits: a, b and c.

It is found in the cell inner membrane. In terms of biological role, produces ATP from ADP in the presence of a proton gradient across the membrane. This is ATP synthase epsilon chain from Cupriavidus pinatubonensis (strain JMP 134 / LMG 1197) (Cupriavidus necator (strain JMP 134)).